Here is a 958-residue protein sequence, read N- to C-terminus: Translation initiation factor IF-2 (958 aa).

The span at 50–67 (FKPAAAPKVEAKPAAPKV) shows a compositional bias: low complexity. 2 disordered regions span residues 50–224 (FKPA…RIDF) and 288–374 (EVVP…HELP). 3 stretches are compositionally biased toward basic and acidic residues: residues 68 to 89 (SAEK…EEAK), 96 to 118 (SAEK…EAKP), and 138 to 153 (FKAE…AERR). A compositionally biased stretch (low complexity) spans 157–169 (KGNNRDQQQNGNR). Composition is skewed to basic and acidic residues over residues 185-195 (RDNRRFNDQAK) and 290-323 (VPEK…DGPR). Residues 337 to 346 (NQKNSNWNNN) are compositionally biased toward low complexity. A compositionally biased stretch (basic and acidic residues) spans 365 to 374 (VTERKFHELP). A tr-type G domain is found at 460–627 (ERPPVVTIMG…TVLLVAEIQE (168 aa)). Residues 469-476 (GHVDHGKT) are G1. 469–476 (GHVDHGKT) lines the GTP pocket. Residues 494 to 498 (GITQH) are G2. The G3 stretch occupies residues 515 to 518 (DTPG). GTP contacts are provided by residues 515–519 (DTPGH) and 569–572 (NKID). The tract at residues 569 to 572 (NKID) is G4. A G5 region spans residues 605 to 607 (SAK).

This sequence belongs to the TRAFAC class translation factor GTPase superfamily. Classic translation factor GTPase family. IF-2 subfamily.

It localises to the cytoplasm. In terms of biological role, one of the essential components for the initiation of protein synthesis. Protects formylmethionyl-tRNA from spontaneous hydrolysis and promotes its binding to the 30S ribosomal subunits. Also involved in the hydrolysis of GTP during the formation of the 70S ribosomal complex. This chain is Translation initiation factor IF-2, found in Streptococcus pneumoniae serotype 4 (strain ATCC BAA-334 / TIGR4).